A 413-amino-acid chain; its full sequence is MEIIRPMRVAIVAESFLPNVNGVTNSVLRVLEHLKANGHDALVIAPGARDFEEEIGHYLGFEIVRVPTVRVPLIDSLPIGVPLPSVTSVLREYNPDIIHLASPFVLGGAAAFAARQLRIPAIAIYQTDVAGFSQRYHLAPLATASWEWIKTVHNMCQRTLAPSSMSIDELRDHGINDIFHWARGVDSKRFHPGKRSVALRKSWDPSGAKKIVGFVGRLASEKGVECLAGLSGRSDIQLVIVGDGPEAKYLQEMMPDAIFTGALGGEELATTYASLDLFVHPGEFETFCQAIQEAQASGVPTIGPRAGGPIDLINEGVNGLLLDVVDFKETLPAAAEWILDDSRHSEMCAAAWEGVKDKTWEALCTQLLQHYADVIALSQRIPLTFFGPSAEVAKLPLWVARALGVRTRISIEA.

It belongs to the glycosyltransferase group 1 family.

It participates in phospholipid metabolism; phosphatidylinositol metabolism. Its function is as follows. Catalyzes the addition of a mannose residue from GDP-D-mannose to GlcAGroAc2 to generate 1,2-di-O-C16/C18:1-(alpha-D-mannopyranosyl)-(1-4)-(alpha-D-glucopyranosyluronic acid)-(1-3)-glycerol(ManGlcAGroAc2). This chain is GDP-mannose-dependent alpha-mannosyltransferase (mgtA), found in Corynebacterium glutamicum (strain ATCC 13032 / DSM 20300 / JCM 1318 / BCRC 11384 / CCUG 27702 / LMG 3730 / NBRC 12168 / NCIMB 10025 / NRRL B-2784 / 534).